A 205-amino-acid polypeptide reads, in one-letter code: Imidazole glycerol phosphate synthase subunit HisH (205 aa).

The Glutamine amidotransferase type-1 domain maps to 1 to 205 (MVGIVNYNIG…RILKNFCEIG (205 aa)). The active-site Nucleophile is the cysteine 79. Residues histidine 186 and glutamate 188 contribute to the active site.

As to quaternary structure, heterodimer of HisH and HisF.

It localises to the cytoplasm. It carries out the reaction 5-[(5-phospho-1-deoxy-D-ribulos-1-ylimino)methylamino]-1-(5-phospho-beta-D-ribosyl)imidazole-4-carboxamide + L-glutamine = D-erythro-1-(imidazol-4-yl)glycerol 3-phosphate + 5-amino-1-(5-phospho-beta-D-ribosyl)imidazole-4-carboxamide + L-glutamate + H(+). The enzyme catalyses L-glutamine + H2O = L-glutamate + NH4(+). Its pathway is amino-acid biosynthesis; L-histidine biosynthesis; L-histidine from 5-phospho-alpha-D-ribose 1-diphosphate: step 5/9. IGPS catalyzes the conversion of PRFAR and glutamine to IGP, AICAR and glutamate. The HisH subunit catalyzes the hydrolysis of glutamine to glutamate and ammonia as part of the synthesis of IGP and AICAR. The resulting ammonia molecule is channeled to the active site of HisF. In Wolinella succinogenes (strain ATCC 29543 / DSM 1740 / CCUG 13145 / JCM 31913 / LMG 7466 / NCTC 11488 / FDC 602W) (Vibrio succinogenes), this protein is Imidazole glycerol phosphate synthase subunit HisH.